Consider the following 454-residue polypeptide: N-acetyl-S-(2-succino)cysteine lyase (454 aa).

106–107 (TT) is a binding site for fumarate. Histidine 154 acts as the Proton donor/acceptor in catalysis. Residue arginine 233 coordinates fumarate. Serine 277 acts as the Proton donor/acceptor in catalysis. Fumarate-binding positions include threonine 278 and 283–285 (KRN).

Belongs to the lyase 1 family.

The enzyme catalyses N-acetyl-S-(2-succino)-L-cysteine = N-acetyl-L-cysteine + fumarate. Its pathway is amino-acid biosynthesis; L-cysteine biosynthesis. Functionally, catalyzes the cleavage of N-acetyl-S-(2-succino)cysteine into fumarate and N-acetylcysteine. Is involved in a S-(2-succino)cysteine (2SC) degradation pathway that allows the bacterium to recover cysteine from 2SC and to detoxify 2SC that may be a toxic metabolite. Can also perform the reverse reaction in vitro, and has minor activity against 2SC and other small molecule thiols. The polypeptide is N-acetyl-S-(2-succino)cysteine lyase (Dickeya dadantii (strain 3937) (Erwinia chrysanthemi (strain 3937))).